The sequence spans 293 residues: tRNA(His) guanylyltransferase (293 aa).

Mg(2+)-binding residues include Asp29, Gly30, and Asp76. GTP-binding positions include 29-34 (DGRGFT) and 75-76 (SD). The disordered stretch occupies residues 226 to 252 (KKVSEEEAEEMSSSAVPEVKSKSQVEK).

The protein belongs to the tRNA(His) guanylyltransferase family. The cofactor is Mg(2+).

The catalysed reaction is a 5'-end ribonucleotide-tRNA(His) + GTP + ATP + H2O = a 5'-end phospho-guanosine-ribonucleotide-tRNA(His) + AMP + 2 diphosphate + H(+). Its function is as follows. Adds a GMP to the 5'-end of tRNA(His) after transcription and RNase P cleavage. This Neurospora crassa (strain ATCC 24698 / 74-OR23-1A / CBS 708.71 / DSM 1257 / FGSC 987) protein is tRNA(His) guanylyltransferase (rgt-1).